The chain runs to 130 residues: Small ribosomal subunit protein uS11 (130 aa).

It belongs to the universal ribosomal protein uS11 family. In terms of assembly, part of the 30S ribosomal subunit. Interacts with proteins S7 and S18. Binds to IF-3.

In terms of biological role, located on the platform of the 30S subunit, it bridges several disparate RNA helices of the 16S rRNA. Forms part of the Shine-Dalgarno cleft in the 70S ribosome. In Synechococcus sp. (strain CC9605), this protein is Small ribosomal subunit protein uS11.